Consider the following 402-residue polypeptide: MAETSEEVAVLVQRVVKDITNAFRRNPHIDEIGLIPCPEARYNRSPIVLVENKLGVESWCVKFLLPYVHNKLLLYRTRKQWLNRDELIDVTCTLLLLNPDFTTAWNVRKELILSGTLNPIKDLHLGKLALTKFPKSPETWIHRRWVLQQLIQETSLPSFVTKGNLGTIPTERAQRLIQEEMEVCGEAAGRYPSNYNAWSHRIWVLQHLAKLDVKILLDELSSTKHWASMHVSDHSGFHYRQFLLKSLISQTVIDSSVMEQNPLRSEPALVPPKDEEAAVSTEEPRINLPHLLEEEVEFSTDLIDSYPGHETLWCHRRHIFYLQHHLNAGSQLSQAMEVDGLNDSSKQGYSQETKRLKRTPVPDSLGLEMEHRFIDQVLSTCRNVEQARFASAYRKWLVTLSQ.

The residue at position 2 (Ala-2) is an N-acetylalanine. 4 PFTA repeats span residues 87–120, 122–155, 180–213, and 219–252; these read LIDV…LNPI, DLHL…QETS, EMEV…KLDV, and ELSS…SQTV. Positions 263 to 282 are disordered; that stretch reads LRSEPALVPPKDEEAAVSTE. Residues 295 to 328 form a PFTA 5 repeat; that stretch reads EVEFSTDLIDSYPGHETLWCHRRHIFYLQHHLNA.

Belongs to the protein prenyltransferase subunit alpha family.

The protein is Protein prenyltransferase alpha subunit repeat-containing protein 1 (PTAR1) of Homo sapiens (Human).